The sequence spans 1579 residues: MAP kinase kinase kinase SSK2 (1579 aa).

The interval 1–70 (MSHSDYFNYK…HSTQYFRSPN (70 aa)) is disordered. The span at 21–44 (SSKMRQSSSSSSSRLRSESLGRNS) shows a compositional bias: low complexity. Residues 45–67 (NTTQARVASSPISPGLHSTQYFR) are compositionally biased toward polar residues. 4 positions are modified to phosphoserine: serine 57, serine 62, serine 78, and serine 118. Disordered stretches follow at residues 97 to 155 (FFHQ…ESEI) and 190 to 243 (SIMS…GSTT). Over residues 104–118 (SGSSSSSARSSRRPS) the composition is skewed to low complexity. The segment covering 127–139 (NPQQSLPKLSTQP) has biased composition (polar residues). The span at 144–155 (KKVEASKTESEI) shows a compositional bias: basic and acidic residues. Serine 290 is modified (phosphoserine). One can recognise a Protein kinase domain in the interval 1266 to 1558 (WQKRNFIGGG…AVELLMDPWI (293 aa)). ATP-binding positions include 1272–1280 (IGGGTFGRV) and lysine 1295. The active-site Proton acceptor is aspartate 1390. Serine 1424 is subject to Phosphoserine.

The protein belongs to the protein kinase superfamily. STE Ser/Thr protein kinase family. MAP kinase kinase kinase subfamily. As to quaternary structure, interacts with by SSK1.

The enzyme catalyses L-seryl-[protein] + ATP = O-phospho-L-seryl-[protein] + ADP + H(+). The catalysed reaction is L-threonyl-[protein] + ATP = O-phospho-L-threonyl-[protein] + ADP + H(+). Kinase involved in a signal transduction pathway that is activated by changes in the osmolarity of the extracellular environment. Activates the PBS2 MAP kinase kinase by phosphorylation. The polypeptide is MAP kinase kinase kinase SSK2 (SSK2) (Saccharomyces cerevisiae (strain ATCC 204508 / S288c) (Baker's yeast)).